We begin with the raw amino-acid sequence, 245 residues long: Myozenin-3 (245 aa).

Phosphoserine is present on Ser-31. The tract at residues 50-67 (LLFQKRQRRVQKFTFELS) is binding to ACTN2, PPP3CA and TCAP. The segment at 67 to 108 (SESLQAILASSARGKVAGRAAQATVPNGLEEQNHHSETHVFQ) is binding to FLNC. Positions 93 to 134 (NGLEEQNHHSETHVFQGSPGDPGITHLGAAGTGSVRSPSALA) are disordered. The segment at 180 to 201 (PIPRDYRNFNKTPVPFGGPHVR) is binding to ACTN2.

Belongs to the myozenin family. Interacts with ACTN2, LDB3, FLNC, PPP3CA and TCAP. Expressed specifically in skeletal muscle and is enriched in fast-twitch muscle fibers. Not detected in heart.

The protein resides in the cytoplasm. It is found in the myofibril. Its subcellular location is the sarcomere. It localises to the z line. Myozenins may serve as intracellular binding proteins involved in linking Z line proteins such as alpha-actinin, gamma-filamin, TCAP/telethonin, LDB3/ZASP and localizing calcineurin signaling to the sarcomere. Plays an important role in the modulation of calcineurin signaling. May play a role in myofibrillogenesis. This chain is Myozenin-3, found in Mus musculus (Mouse).